The following is a 291-amino-acid chain: Porphobilinogen deaminase (291 aa).

Position 237 is an S-(dipyrrolylmethanemethyl)cysteine (C237).

Belongs to the HMBS family. Monomer. Dipyrromethane serves as cofactor.

The enzyme catalyses 4 porphobilinogen + H2O = hydroxymethylbilane + 4 NH4(+). The protein operates within porphyrin-containing compound metabolism; protoporphyrin-IX biosynthesis; coproporphyrinogen-III from 5-aminolevulinate: step 2/4. Functionally, tetrapolymerization of the monopyrrole PBG into the hydroxymethylbilane pre-uroporphyrinogen in several discrete steps. This is Porphobilinogen deaminase from Clostridium perfringens (strain ATCC 13124 / DSM 756 / JCM 1290 / NCIMB 6125 / NCTC 8237 / Type A).